Reading from the N-terminus, the 519-residue chain is MLTAQRSRIRCREITGPAHSVALKARPPLSRDIDDIFVRRRKQEATRGEVLEFTKDQSSCDVRMRWERNTQRRVVSATVNRHLQDALDQYQMGIDEKRERLRELLESEELELFKEMEAKKETVLERQAKMHERAKTLRERRESERQRVVADKLDQLFREQSEELRAVQIKRRQDQVCTERESQIRTKEEVRRVQEEEEKLFAQMWESDRLAKEERHNLELQRQRENNLQQKAVLQTQMDMAEQQRIQAKELKQEEAQLLKDQREMLRLEAEREHRQKLQDQEKRRKQLDLSLRLKMKRLTRDRQEELALDMSILEQLLAQEKDEKQDEVLKKLERQEEQRRYREYLSQQLEEQKRLEAETEQLFESELQQAWARREAQWRLEKTARDRLMKDVMDTLRLQIQEKLNENMQKQAEAFKEKEELDRIIQANKLLDEEEKAHFREATKEYQADLLAQMMYRQRIREAEEAEKEYEFQKGLMYEEQYNKKIQDILSRPISSTTAVHPFRRRDRRCSSSGGQMS.

Coiled coils occupy residues 80 to 107 (NRHL…LLES) and 210 to 339 (LAKE…QEEQ). Residues 498 to 519 (TTAVHPFRRRDRRCSSSGGQMS) form a disordered region.

This sequence belongs to the CFAP53 family.

It is found in the cytoplasm. The protein localises to the cytoskeleton. Its subcellular location is the cilium axoneme. It localises to the cilium basal body. Its function is as follows. Microtubule inner protein (MIP) part of the dynein-decorated doublet microtubules (DMTs) in cilia axoneme, which is required for motile cilia beating. Regulates motility patterns of both 9+0 and 9+2 motile cilia through differential localization and recruitment of axonemal dynein components. Required for cilium motility within the spinal canal and Kuppfer's vesicle and is involved in the establishment of left-right symmetry during embryogenesis. The chain is Cilia- and flagella-associated protein 53 from Danio rerio (Zebrafish).